The chain runs to 599 residues: MAFLKARLAALLSVAVSCSAVLYDDAKKLPSTSYDYIVVGGGTAGSVLANRLTEDAKTQVLVLEGGPSGQGVLELEIPFYNLYGPHDPLWNWNISVLPQDTAADRVLVYPAGRVLGGTSMINGMYYSRGPSSDWDRMAAITGDSGWSWDKIYPYFIKSEVLTPSVGGRNTTGELDPSIHGKQGIVATSSPNWSYETDPLIISALNELGGPYSPILDFNNGSPLGVAWFQYTMRNGSREDAATSYFADKFLGRSNLHVLVNATVDRVVQSKSGGPVNGVEYHLSNGTGSTLHATANKEVIVSAGTFGTPHLLLNSGIGDNSTLASYNVTPIAHVPDVGKNLTDYSTVILTWSVNSTTTLYDLITKNETFANDSLAQWTASHTGPFSNGVSNHMFNLRLNETDPEVQQMLKQYGDPSSSDKAPHITLQFVEGGLGSGNSISMENFVVTPLSRGSVTLNTTDPSGPPVVDAGILTSPFDVFVLEQGILAARKFLSASAWDNYIIAPASGLDAGIPVDGSVNTTALESYIRTQATAGWRETGTAKMSPKGARWGVVDPDFRVKNVQGLRVVDASVFPEIPSLHTQIPIYAIAERAADLIKGSH.

Positions 1–20 are cleaved as a signal peptide; that stretch reads MAFLKARLAALLSVAVSCSA. FAD-binding positions include 43 to 44 and 64 to 65; these read TA and EG. Asn93 carries N-linked (GlcNAc...) asparagine glycosylation. 122–125 contributes to the FAD binding site; sequence NGMY. Asn169, Asn191, Asn234, Asn260, Asn284, Asn319, Asn339, Asn353, Asn365, Asn370, Asn398, Asn456, and Asn518 each carry an N-linked (GlcNAc...) asparagine glycan. Residues Ala569 and 580–581 contribute to the FAD site; that span reads TQ.

This sequence belongs to the GMC oxidoreductase family. In terms of assembly, homodimer. The cofactor is FAD.

Its function is as follows. Dehydrogenase; part of the gene cluster that mediates the biosynthesis of erinacines, cyathane-xylosides that show unique biological activities, including leishmanicidal activity, stimulating activity for nerve growth-factor synthesis, and agonistic activity toward the kappa opioid receptor. The role of the dehydrogenase eriK within the pathway has still to be determined. The first step of the erinacines biosynthesis pathway is catalyzed by the geranylgeranyl diphosphate (GGPP) synthase eriE via conversion of farnesyl pyrophosphate and isopentyl pyrophosphate into geranylgeranyl pyrophosphate (GGPP). GGPP is then substrate of the diterpene cyclase eriG for the production of cyatha-3,12-diene. The cytochrome P450 monooxygenase eriI then hydroxylates cyatha-3,12-diene at C-14 of the seven-membered ring to produce erinacol, which is further hydroxylated at C-15 by the cytochrome P450 monooxygenase eriC to yield cyathadiol. The cytochrome P450 monooxygenase eriA then catalyzes C-11 hydroxylation in the presence of the short chain dehydrogenase/reductase (SDR) eriH, which leads to the production of cyathatriol. The acetyltransferase eriL converts cyathatriol into 11-O-acetyl-cyathatriol. The SDR eriH catalyzes further oxidation of 11-O-acetyl-cyathatriol into 1-O-acetylcyathin A3. Finally, the glycosyl transferase eriJ tranfers xylose from UDP-xylose onto C-14 of 11-O-acetyl-cyathatriol to form eracine Q. EriJ is also able to convert 11-O-acetyl-cyathatriol to eracine Q2 by using UDP-D-glucose as cosubstrate, but at a lower rate. The sequence is that of Dehydrogenase eriK from Hericium erinaceus (Lion's mane mushroom).